A 390-amino-acid chain; its full sequence is Flagellar P-ring protein (390 aa).

The signal sequence occupies residues Met1–Ala25.

Belongs to the FlgI family. In terms of assembly, the basal body constitutes a major portion of the flagellar organelle and consists of four rings (L,P,S, and M) mounted on a central rod.

Its subcellular location is the periplasm. The protein localises to the bacterial flagellum basal body. Functionally, assembles around the rod to form the L-ring and probably protects the motor/basal body from shearing forces during rotation. The sequence is that of Flagellar P-ring protein from Syntrophus aciditrophicus (strain SB).